Reading from the N-terminus, the 289-residue chain is Zinc finger matrin-type protein 3 (289 aa).

Residues 1 to 59 (MILLQHAGLPPPKRPSSSPPMSVAARSTGALQLPPQKPFGQEASLPLAGEEEPPKGGEQ) form a disordered region. The span at 9-18 (LPPPKRPSSS) shows a compositional bias: pro residues. 2 Matrin-type zinc fingers span residues 70–100 (LYCK…KLRN) and 147–177 (DYCK…RLRL). Polar residues predominate over residues 180 to 191 (AQSNSFSDSSEV). The segment at 180–200 (AQSNSFSDSSEVGQRRTRKEG) is disordered. A Matrin-type 3 zinc finger spans residues 246–276 (FYCSMCNVGAGEEVEFRQHLESKQHKSKVSE).

In terms of assembly, interacts with dsRNA.

The protein resides in the nucleus. Its subcellular location is the nucleolus. Its function is as follows. Acts as a bona fide target gene of p53/TP53. May play a role in the TP53-dependent growth regulatory pathway. May contribute to TP53-mediated apoptosis by regulation of TP53 expression and translocation to the nucleus and nucleolus. This is Zinc finger matrin-type protein 3 from Bos taurus (Bovine).